The sequence spans 101 residues: Large ribosomal subunit protein bL28 (101 aa).

Belongs to the bacterial ribosomal protein bL28 family.

The protein is Large ribosomal subunit protein bL28 of Methylorubrum extorquens (strain CM4 / NCIMB 13688) (Methylobacterium extorquens).